Consider the following 177-residue polypeptide: Putative zinc finger protein 826 (177 aa).

The C2H2-type 1; degenerate zinc finger occupies 99-114; it reads KTFTWSSSPHKHRRTH. The segment at 120–142 adopts a C2H2-type 2; degenerate zinc-finger fold; that stretch reads YKCEECGKAFTASSTLSEYKTIH. The segment at 148-170 adopts a C2H2-type 3 zinc-finger fold; the sequence is CKCEECGKAFNWSSDFNKHKRIH.

The protein resides in the nucleus. Functionally, may be involved in transcriptional regulation. The chain is Putative zinc finger protein 826 (ZNF826P) from Homo sapiens (Human).